We begin with the raw amino-acid sequence, 354 residues long: Rhodopsin (354 aa).

The Extracellular segment spans residues 1–36 (MNGTEGPNFYIPMSNKTGVVRSPFDYPQYYLAEPWK). Asparagine 2 carries an N-linked (GlcNAc...) (hybrid) asparagine glycan. Asparagine 15 is a glycosylation site (N-linked (GlcNAc...) asparagine). A helical membrane pass occupies residues 37–61 (YSVLAAYMFLLILLGLPINFMTLYV). The Cytoplasmic portion of the chain corresponds to 62–73 (TIQHKKLRTPLN). Residues 74-96 (YILLNLGVCNHFMVLCGFTITMY) form a helical membrane-spanning segment. At 97 to 110 (TSLHGYFVFGQTGC) the chain is on the extracellular side. Residues cysteine 110 and cysteine 187 are joined by a disulfide bond. Residues 111 to 133 (YFEGFFATLGGEIALWSLVVLAI) traverse the membrane as a helical segment. A 'Ionic lock' involved in activated form stabilization motif is present at residues 134–136 (ERY). Residues 134-152 (ERYIVVCKPMSNFRFGENH) are Cytoplasmic-facing. Residues 153–173 (AMMGVAFTWIMALACAVPPLF) form a helical membrane-spanning segment. At 174 to 202 (GWSRYIPEGMQCSCGVDYYTLKPEVNNES) the chain is on the extracellular side. A helical membrane pass occupies residues 203 to 224 (FVIYMFVVHFLIPLIIISFCYG). Residues 225–252 (RLVCTVKEAAAQQQESATTQKAEKEVTR) lie on the Cytoplasmic side of the membrane. Residues 253-274 (MVIIMVIFFLICWVPYAYVAFY) form a helical membrane-spanning segment. The Extracellular portion of the chain corresponds to 275–286 (IFTHQGSEFGPI). Residues 287–308 (FMTVPAFFAKSSAIYNPVIYIM) traverse the membrane as a helical segment. Residue lysine 296 is modified to N6-(retinylidene)lysine. Residues 309–354 (LNKQFRNCMITTLCCGKNPFGDDDASSAATSKTEATSVSTSQVSPA) are Cytoplasmic-facing. 2 S-palmitoyl cysteine lipidation sites follow: cysteine 322 and cysteine 323. The interval 332-354 (DASSAATSKTEATSVSTSQVSPA) is disordered. Residues 334–354 (SSAATSKTEATSVSTSQVSPA) are compositionally biased toward low complexity.

This sequence belongs to the G-protein coupled receptor 1 family. Opsin subfamily. Contains one covalently linked retinal chromophore. Upon light absorption, the covalently bound 11-cis-retinal is converted to all-trans-retinal. After hydrolysis of the Schiff base and release of the covalently bound all-trans-retinal, active rhodopsin is regenerated by binding of a fresh molecule of 11-cis-retinal. In terms of tissue distribution, detected in retina rod photoreceptor cell outer segments (at protein level). Detected in retina.

It is found in the membrane. It localises to the cell projection. Its subcellular location is the cilium. The protein resides in the photoreceptor outer segment. Its function is as follows. Photoreceptor required for image-forming vision at low light intensity. Required for photoreceptor cell viability after birth. Light-induced isomerization of 11-cis to all-trans retinal triggers a conformational change that activates signaling via G-proteins. Subsequent receptor phosphorylation mediates displacement of the bound G-protein alpha subunit by arrestin and terminates signaling. The sequence is that of Rhodopsin (RHO) from Lithobates pipiens (Northern leopard frog).